Consider the following 154-residue polypeptide: Myoglobin (154 aa).

The Globin domain maps to 2-148; it reads GLSEAEWQLV…FRKDIAAKYK (147 aa). Ser-4 is modified (phosphoserine). Residue His-65 participates in nitrite binding. Position 65 (His-65) interacts with O2. Thr-68 bears the Phosphothreonine mark. Heme b is bound at residue His-94.

Belongs to the globin family. As to quaternary structure, monomeric.

Its subcellular location is the cytoplasm. The protein localises to the sarcoplasm. It carries out the reaction Fe(III)-heme b-[protein] + nitric oxide + H2O = Fe(II)-heme b-[protein] + nitrite + 2 H(+). The enzyme catalyses H2O2 + AH2 = A + 2 H2O. Its function is as follows. Monomeric heme protein which primary function is to store oxygen and facilitate its diffusion within muscle tissues. Reversibly binds oxygen through a pentacoordinated heme iron and enables its timely and efficient release as needed during periods of heightened demand. Depending on the oxidative conditions of tissues and cells, and in addition to its ability to bind oxygen, it also has a nitrite reductase activity whereby it regulates the production of bioactive nitric oxide. Under stress conditions, like hypoxia and anoxia, it also protects cells against reactive oxygen species thanks to its pseudoperoxidase activity. This chain is Myoglobin (MB), found in Ziphius cavirostris (Cuvier's beaked whale).